The chain runs to 529 residues: Nucleolar protein 58 (529 aa).

T34 carries the phosphothreonine modification. Phosphoserine is present on S109. Residues 155 to 400 are sufficient for interaction with NOPCHAP1; the sequence is ADKVDTMIVQ…LEARLRTLED (246 aa). K157 is covalently cross-linked (Glycyl lysine isopeptide (Lys-Gly) (interchain with G-Cter in SUMO2)). The 119-residue stretch at 282–400 folds into the Nop domain; it reads IAPNVTVMVG…LEARLRTLED (119 aa). 2 positions are modified to phosphoserine: S304 and S351. Glycyl lysine isopeptide (Lys-Gly) (interchain with G-Cter in SUMO2) cross-links involve residues K353, K411, K415, K422, K426, K441, K444, and K465. Residues 409–529 are disordered; that stretch reads TGKALAKTEK…KKKKKRENED (121 aa). Residues 414–427 are compositionally biased toward basic and acidic residues; the sequence is AKTEKYEHKSEVKT. Residue K467 forms a Glycyl lysine isopeptide (Lys-Gly) (interchain with G-Cter in SUMO); alternate linkage. K467 is covalently cross-linked (Glycyl lysine isopeptide (Lys-Gly) (interchain with G-Cter in SUMO1); alternate). A Glycyl lysine isopeptide (Lys-Gly) (interchain with G-Cter in SUMO2); alternate cross-link involves residue K467. Over residues 469-481 the composition is skewed to acidic residues; it reads EEEEEEKVAEEEE. S483 is subject to Phosphoserine. A Glycyl lysine isopeptide (Lys-Gly) (interchain with G-Cter in SUMO2) cross-link involves residue K485. Over residues 485–495 the composition is skewed to basic residues; the sequence is KKKKKRGKKKH. A Glycyl lysine isopeptide (Lys-Gly) (interchain with G-Cter in SUMO); alternate cross-link involves residue K497. Residue K497 forms a Glycyl lysine isopeptide (Lys-Gly) (interchain with G-Cter in SUMO2); alternate linkage. A phosphoserine mark is found at S502 and S514. The segment covering 517–529 has biased composition (basic residues); sequence KKKKKKKKRENED.

Belongs to the NOP5/NOP56 family. Core component of box C/D small nucleolar ribonucleoprotein (snoRNP) particles; the core proteins SNU13, NOP56, NOP58 and FBL or FBLL1 assemble stepwise onto the snoRNA. Interacts with NOLC1/Nopp140. Interacts with NOPCHAP1, NUFIP1, RUVBL1 and RUVBL2; NOPCHAP1 bridges the association of NOP58 with RUVBL1:RUVBL2 and NUFIP1. Interacts with PIH1D1. Part of the small subunit (SSU) processome, composed of more than 70 proteins and the RNA chaperone small nucleolar RNA (snoRNA) U3. Post-translationally, sumoylation is essential for high-affinity binding to snoRNAs. Ubiquitous.

The protein resides in the nucleus. Its subcellular location is the nucleolus. The protein localises to the nucleoplasm. Functionally, required for the biogenesis of box C/D snoRNAs such as U3, U8 and U14 snoRNAs. Part of the small subunit (SSU) processome, first precursor of the small eukaryotic ribosomal subunit. During the assembly of the SSU processome in the nucleolus, many ribosome biogenesis factors, an RNA chaperone and ribosomal proteins associate with the nascent pre-rRNA and work in concert to generate RNA folding, modifications, rearrangements and cleavage as well as targeted degradation of pre-ribosomal RNA by the RNA exosome. Core component of box C/D small nucleolar ribonucleoprotein (snoRNP) complexes that function in methylation of multiple sites on ribosomal RNAs (rRNAs) and messenger RNAs (mRNAs). In Homo sapiens (Human), this protein is Nucleolar protein 58.